Here is a 587-residue protein sequence, read N- to C-terminus: Bifunctional lycopene cyclase/phytoene synthase (587 aa).

Residues 1 to 236 are lycopene beta-cyclase; sequence MGLDYILVHV…IVFGLVCIDY (236 aa). 7 helical membrane-spanning segments follow: residues 5–25, 35–55, 65–85, 91–111, 116–136, 145–165, and 218–238; these read YILVHVTYNIPLAGILTLVYW, KISTLVIISLVATIPWDSYLV, NGVIGWTLYDIPSEEVFFFII, SLVYLILTRWLVLPMYLGTVA, LIGASILLLAISVGLIALCFG, IITWAGPFLLIQWVFSSGFII, and LFFLITNIVIVFGLVCIDYAI. The segment at 243–587 is phytoene synthase; that stretch reads CELVQSPQAV…VAYRAMAWRK (345 aa).

The protein in the N-terminal section; belongs to the lycopene beta-cyclase family. It in the C-terminal section; belongs to the phytoene/squalene synthase family.

The protein resides in the membrane. The catalysed reaction is all-trans-lycopene = gamma-carotene. It catalyses the reaction gamma-carotene = all-trans-beta-carotene. The enzyme catalyses 2 (2E,6E,10E)-geranylgeranyl diphosphate = 15-cis-phytoene + 2 diphosphate. The protein operates within carotenoid biosynthesis; beta-carotene biosynthesis. Its pathway is carotenoid biosynthesis; phytoene biosynthesis; all-trans-phytoene from geranylgeranyl diphosphate: step 1/1. Bifunctional enzyme that catalyzes the reactions from geranylgeranyl diphosphate to phytoene (phytoene synthase) and lycopene to beta-carotene via the intermediate gamma-carotene (lycopene cyclase). The protein is Bifunctional lycopene cyclase/phytoene synthase of Aspergillus oryzae (strain ATCC 42149 / RIB 40) (Yellow koji mold).